A 317-amino-acid chain; its full sequence is MQPIDELIERLKKGDRRAVAKLITLVENDESKAKVIIKKIYPLTGNAHIVGITGPPGAGKSTLLDKLIKEARREGLIVGVIAVDPTSPFTGGALLGDRIRMQRHSTDPGVFIRSMATRGSLGGLSKATNDAIKILDAYGCDVIFVETVGVGQIEVDIVKTADTVVLVTIPGLGDDVQTIKAGLMEIADIFVVNKADREGADITYFELTLALDLEKEKWEKIGWKPPIIETVGTTGKGVKELWEKIKEHKKFLEESGKLAEKRRTRIEEEVKTIIAGIVAKKVEASLSEFEDIISMVLNKDLDPYSAADLVLEKIVGR.

GTP contacts are provided by residues 54-62 (GPPGAGKST), Asp-196, and 231-233 (VGT).

It belongs to the SIMIBI class G3E GTPase family. ArgK/MeaB subfamily.

Functionally, may have GTPase activity. May also bind and hydrolyze ATP. May function as chaperone. This chain is Putative GTPase PH0274, found in Pyrococcus horikoshii (strain ATCC 700860 / DSM 12428 / JCM 9974 / NBRC 100139 / OT-3).